Consider the following 484-residue polypeptide: Glutamate--tRNA ligase (484 aa).

The 'HIGH' region signature appears at proline 11–asparagine 21. The 'KMSKS' region signature appears at lysine 252 to arginine 256. Lysine 255 contributes to the ATP binding site.

It belongs to the class-I aminoacyl-tRNA synthetase family. Glutamate--tRNA ligase type 1 subfamily. In terms of assembly, monomer.

Its subcellular location is the cytoplasm. The enzyme catalyses tRNA(Glu) + L-glutamate + ATP = L-glutamyl-tRNA(Glu) + AMP + diphosphate. In terms of biological role, catalyzes the attachment of glutamate to tRNA(Glu) in a two-step reaction: glutamate is first activated by ATP to form Glu-AMP and then transferred to the acceptor end of tRNA(Glu). This is Glutamate--tRNA ligase from Staphylococcus aureus (strain MRSA252).